Here is a 217-residue protein sequence, read N- to C-terminus: MWKLIGALLESRLSNVLDETVRYGNETSERVGRTVSSYIKGDEETARELIETTAAVNEKSYRIEDECLKILGLHQPVAKDLRLASSIMRSAIELERINILLAYIARYAIDGRDRTPPHIEFMSQTVQDMINDALGALMNRDIQLLKRSTRNYIQLQDLYNQLQESNRDFSESGNLMLVARNLLSMGHHVMGMDDRIAYLIVGKRVIHHKVFYSVLMK.

Belongs to the PhoU family. In terms of assembly, homodimer.

It localises to the cytoplasm. Plays a role in the regulation of phosphate uptake. The polypeptide is Phosphate-specific transport system accessory protein PhoU homolog 2 (Methanothermobacter thermautotrophicus (strain ATCC 29096 / DSM 1053 / JCM 10044 / NBRC 100330 / Delta H) (Methanobacterium thermoautotrophicum)).